Consider the following 245-residue polypeptide: 4-hydroxy-tetrahydrodipicolinate reductase (245 aa).

Residues 7-12 (GAKGKV), 75-77 (GTT), and 102-105 (APNF) contribute to the NAD(+) site. Histidine 132 (proton donor/acceptor) is an active-site residue. Histidine 133 serves as a coordination point for (S)-2,3,4,5-tetrahydrodipicolinate. Lysine 136 (proton donor) is an active-site residue. 142-143 (GT) is a (S)-2,3,4,5-tetrahydrodipicolinate binding site.

The protein belongs to the DapB family.

It localises to the cytoplasm. The enzyme catalyses (S)-2,3,4,5-tetrahydrodipicolinate + NAD(+) + H2O = (2S,4S)-4-hydroxy-2,3,4,5-tetrahydrodipicolinate + NADH + H(+). The catalysed reaction is (S)-2,3,4,5-tetrahydrodipicolinate + NADP(+) + H2O = (2S,4S)-4-hydroxy-2,3,4,5-tetrahydrodipicolinate + NADPH + H(+). It functions in the pathway amino-acid biosynthesis; L-lysine biosynthesis via DAP pathway; (S)-tetrahydrodipicolinate from L-aspartate: step 4/4. Functionally, catalyzes the conversion of 4-hydroxy-tetrahydrodipicolinate (HTPA) to tetrahydrodipicolinate. This is 4-hydroxy-tetrahydrodipicolinate reductase from Mycobacterium sp. (strain KMS).